A 618-amino-acid polypeptide reads, in one-letter code: DNA mismatch repair protein MutL (618 aa).

The disordered stretch occupies residues 371–401; sequence AREPATPRYSGGASGGSGGRQSVGGWSHAQP. Gly residues predominate over residues 382–392; the sequence is GASGGSGGRQS.

This sequence belongs to the DNA mismatch repair MutL/HexB family.

This protein is involved in the repair of mismatches in DNA. It is required for dam-dependent methyl-directed DNA mismatch repair. May act as a 'molecular matchmaker', a protein that promotes the formation of a stable complex between two or more DNA-binding proteins in an ATP-dependent manner without itself being part of a final effector complex. This is DNA mismatch repair protein MutL from Salmonella arizonae (strain ATCC BAA-731 / CDC346-86 / RSK2980).